Reading from the N-terminus, the 353-residue chain is MSSSPTTVGVVFGGCSGEHDVSIRSAQTVAKGLTLGANRERYRVVLVYIDRDGRWWGPDLAGKVLSSGCPPADSDLPQPLPAPGFRGLPAGTDVVAVWYPVLHGPNGEDGTIQGLFELMQQPYVGAGVLGSAVSMDKQAMKAALAGAGLAQVPYVCAQADELSDAARQEALLKRIESGLCYPCFIKPANLGSSVGISKARNREELIHGLRLAATLDPRLVVEQGVQARELECAVLGGTTLRASVVGEVRFDADWYDYETKYTDGRSTTLIPAPLPDGIVEAIRSQSIQACAAVGVTGMARVDFFYDDSRDRVWLNEINTLPGFTSQSMYPMLWEASGVTLEQLVHELLESAGQ.

Positions 141–349 constitute an ATP-grasp domain; sequence KAALAGAGLA…LEQLVHELLE (209 aa). ATP is bound at residue 176 to 231; the sequence is ESGLCYPCFIKPANLGSSVGISKARNREELIHGLRLAATLDPRLVVEQGVQARELE. 3 residues coordinate Mg(2+): Asp-302, Glu-316, and Asn-318.

Belongs to the D-alanine--D-alanine ligase family. It depends on Mg(2+) as a cofactor. The cofactor is Mn(2+).

The protein resides in the cytoplasm. The catalysed reaction is 2 D-alanine + ATP = D-alanyl-D-alanine + ADP + phosphate + H(+). It functions in the pathway cell wall biogenesis; peptidoglycan biosynthesis. Its function is as follows. Cell wall formation. The polypeptide is D-alanine--D-alanine ligase (Parasynechococcus marenigrum (strain WH8102)).